Consider the following 508-residue polypeptide: Endoglucanase 6 (508 aa).

The signal sequence occupies residues 1–33 (MLAASLRVEAVAVVAAAVLVLLLSPAAVVVVAG). The Nucleophile role is filled by Asp89. Catalysis depends on residues His419, Asp471, and Glu480.

It belongs to the glycosyl hydrolase 9 (cellulase E) family.

It is found in the secreted. It catalyses the reaction Endohydrolysis of (1-&gt;4)-beta-D-glucosidic linkages in cellulose, lichenin and cereal beta-D-glucans.. The protein is Endoglucanase 6 of Oryza sativa subsp. japonica (Rice).